The sequence spans 213 residues: Large ribosomal subunit protein uL3 (213 aa).

This sequence belongs to the universal ribosomal protein uL3 family. In terms of assembly, part of the 50S ribosomal subunit. Forms a cluster with proteins L14 and L19.

One of the primary rRNA binding proteins, it binds directly near the 3'-end of the 23S rRNA, where it nucleates assembly of the 50S subunit. This chain is Large ribosomal subunit protein uL3, found in Bifidobacterium longum subsp. infantis (strain ATCC 15697 / DSM 20088 / JCM 1222 / NCTC 11817 / S12).